Consider the following 405-residue polypeptide: L-carnitine CoA-transferase (405 aa).

The CoA site is built by Lys-97 and Arg-104. Asp-169 (nucleophile) is an active-site residue.

This sequence belongs to the CoA-transferase III family. CaiB subfamily. As to quaternary structure, homodimer.

It is found in the cytoplasm. It carries out the reaction crotonobetainyl-CoA + (R)-carnitine = crotonobetaine + (R)-carnitinyl-CoA. The catalysed reaction is 4-(trimethylamino)butanoyl-CoA + (R)-carnitine = (R)-carnitinyl-CoA + 4-(trimethylamino)butanoate. It participates in amine and polyamine metabolism; carnitine metabolism. Its function is as follows. Catalyzes the reversible transfer of the CoA moiety from gamma-butyrobetainyl-CoA to L-carnitine to generate L-carnitinyl-CoA and gamma-butyrobetaine. Is also able to catalyze the reversible transfer of the CoA moiety from gamma-butyrobetainyl-CoA or L-carnitinyl-CoA to crotonobetaine to generate crotonobetainyl-CoA. In Salmonella choleraesuis (strain SC-B67), this protein is L-carnitine CoA-transferase.